A 62-amino-acid polypeptide reads, in one-letter code: Mu-conotoxin Lt5d (62 aa).

The N-terminal stretch at 1–22 is a signal peptide; that stretch reads MRCLPVFIILLLLIPSAPSVDA. A propeptide spanning residues 23 to 48 is cleaved from the precursor; it reads QPTTKDDVPLASLHDNAKRALQMFWN.

Belongs to the conotoxin T superfamily. Post-translationally, contains 2 disulfide bonds that can be either 'C1-C3, C2-C4' or 'C1-C4, C2-C3', since these disulfide connectivities have been observed for conotoxins with cysteine framework V (for examples, see AC P0DQQ7 and AC P81755). Expressed by the venom duct.

It is found in the secreted. In terms of biological role, mu-conotoxins block voltage-gated sodium channels (Nav). This toxin inhibits tetrodotoxin(TTX)-sensitive sodium channels, but does not affect TTX-resistant sodium channels. Reduces the amplitude of currents without changing the activation and inactivation kinetics of currents. The chain is Mu-conotoxin Lt5d from Conus litteratus (Lettered cone).